We begin with the raw amino-acid sequence, 304 residues long: Glycine--tRNA ligase alpha subunit (304 aa).

It belongs to the class-II aminoacyl-tRNA synthetase family. Tetramer of two alpha and two beta subunits.

It is found in the cytoplasm. The enzyme catalyses tRNA(Gly) + glycine + ATP = glycyl-tRNA(Gly) + AMP + diphosphate. This is Glycine--tRNA ligase alpha subunit from Photorhabdus laumondii subsp. laumondii (strain DSM 15139 / CIP 105565 / TT01) (Photorhabdus luminescens subsp. laumondii).